A 613-amino-acid chain; its full sequence is DBH-like monooxygenase protein 1 (613 aa).

A signal peptide spans 1 to 19 (MCGWPLLVLWALLPATAAG). The Lumenal portion of the chain corresponds to 20 to 587 (SPGRSYPHRV…PLVCEKAASP (568 aa)). In terms of domain architecture, DOMON spans 35 to 148 (GKYWLHWGRQ…STVRVIWAYH (114 aa)). An N-linked (GlcNAc...) asparagine glycan is attached at Asn-114. Tyr-203 is an active-site residue. 2 disulfides stabilise this stretch: Cys-205–Cys-257 and Cys-242–Cys-269. 2 residues coordinate Cu cation: His-235 and His-236. Asn-247 is a glycosylation site (N-linked (GlcNAc...) asparagine). Cu cation is bound by residues His-307, His-389, His-391, and Met-464. Disulfide bonds link Cys-364–Cys-480, Cys-368–Cys-550, and Cys-443–Cys-465. His-389 is a catalytic residue. Asn-476 and Asn-517 each carry an N-linked (GlcNAc...) asparagine glycan. Residues 588–608 (PLHGIFSLRLLTCALLLGSML) traverse the membrane as a helical segment.

It belongs to the copper type II ascorbate-dependent monooxygenase family. The cofactor is Cu(2+). In terms of processing, N-glycosylated. As to expression, broadly exprressed, with highest levels in salivary gland and ovary.

It localises to the endoplasmic reticulum membrane. In Mus musculus (Mouse), this protein is DBH-like monooxygenase protein 1 (Moxd1).